Reading from the N-terminus, the 187-residue chain is PRA1 family protein G1 (187 aa).

Transmembrane regions (helical) follow at residues 84–104 (LFLI…AMWL), 125–145 (VIVF…NSLQ), and 146–166 (CLIL…IIRN).

It belongs to the PRA1 family. As to expression, expressed in roots and lateral roots.

The protein localises to the endosome membrane. Its function is as follows. May be involved in both secretory and endocytic intracellular trafficking in the endosomal/prevacuolar compartments. This Arabidopsis thaliana (Mouse-ear cress) protein is PRA1 family protein G1 (PRA1G1).